The chain runs to 442 residues: Putative mannan endo-1,6-alpha-mannosidase C970.02 (442 aa).

The first 19 residues, methionine 1–alanine 19, serve as a signal peptide directing secretion. N-linked (GlcNAc...) asparagine glycans are attached at residues asparagine 25, asparagine 82, asparagine 107, asparagine 131, asparagine 201, asparagine 236, asparagine 261, asparagine 264, asparagine 277, and asparagine 361.

This sequence belongs to the glycosyl hydrolase 76 family.

It carries out the reaction Random hydrolysis of (1-&gt;6)-alpha-D-mannosidic linkages in unbranched (1-&gt;6)-mannans.. The polypeptide is Putative mannan endo-1,6-alpha-mannosidase C970.02 (Schizosaccharomyces pombe (strain 972 / ATCC 24843) (Fission yeast)).